A 274-amino-acid polypeptide reads, in one-letter code: 2,3,4,5-tetrahydropyridine-2,6-dicarboxylate N-succinyltransferase (274 aa).

The substrate site is built by Arg106 and Asp143.

It belongs to the transferase hexapeptide repeat family. Homotrimer.

It is found in the cytoplasm. It carries out the reaction (S)-2,3,4,5-tetrahydrodipicolinate + succinyl-CoA + H2O = (S)-2-succinylamino-6-oxoheptanedioate + CoA. The protein operates within amino-acid biosynthesis; L-lysine biosynthesis via DAP pathway; LL-2,6-diaminopimelate from (S)-tetrahydrodipicolinate (succinylase route): step 1/3. The chain is 2,3,4,5-tetrahydropyridine-2,6-dicarboxylate N-succinyltransferase from Rickettsia conorii (strain ATCC VR-613 / Malish 7).